Reading from the N-terminus, the 578-residue chain is Sulfite reductase [NADPH] hemoprotein beta-component (578 aa).

The interval 1–21 (MTNTLAGPDRSRDISQPLEKL) is disordered. C443, C449, C488, and C492 together coordinate [4Fe-4S] cluster. Position 492 (C492) interacts with siroheme.

It belongs to the nitrite and sulfite reductase 4Fe-4S domain family. Alpha(8)-beta(8). The alpha component is a flavoprotein, the beta component is a hemoprotein. Siroheme is required as a cofactor. It depends on [4Fe-4S] cluster as a cofactor.

The enzyme catalyses hydrogen sulfide + 3 NADP(+) + 3 H2O = sulfite + 3 NADPH + 4 H(+). Its pathway is sulfur metabolism; hydrogen sulfide biosynthesis; hydrogen sulfide from sulfite (NADPH route): step 1/1. Its function is as follows. Component of the sulfite reductase complex that catalyzes the 6-electron reduction of sulfite to sulfide. This is one of several activities required for the biosynthesis of L-cysteine from sulfate. This is Sulfite reductase [NADPH] hemoprotein beta-component from Methylocella silvestris (strain DSM 15510 / CIP 108128 / LMG 27833 / NCIMB 13906 / BL2).